The primary structure comprises 317 residues: Melanocyte-stimulating hormone receptor (317 aa).

The Extracellular portion of the chain corresponds to methionine 1–glutamate 37. Asparagine 29 carries an N-linked (GlcNAc...) asparagine glycan. Residues valine 38 to isoleucine 63 form a helical membrane-spanning segment. Residues alanine 64 to proline 72 lie on the Cytoplasmic side of the membrane. The helical transmembrane segment at methionine 73–leucine 93 threads the bilayer. At glutamate 94–asparagine 118 the chain is on the extracellular side. A helical transmembrane segment spans residues valine 119–valine 140. The Cytoplasmic portion of the chain corresponds to aspartate 141–arginine 163. A helical membrane pass occupies residues alanine 164–tyrosine 183. Over aspartate 184–cysteine 191 the chain is Extracellular. The chain crosses the membrane as a helical span at residues leucine 192 to leucine 211. Residues valine 212–alanine 240 lie on the Cytoplasmic side of the membrane. The helical transmembrane segment at alanine 241–leucine 266 threads the bilayer. The Extracellular portion of the chain corresponds to cysteine 267–asparagine 279. The chain crosses the membrane as a helical span at residues phenylalanine 280–phenylalanine 300. Topologically, residues arginine 301–tryptophan 317 are cytoplasmic. A lipid anchor (S-palmitoyl cysteine) is attached at cysteine 315.

Belongs to the G-protein coupled receptor 1 family. In terms of assembly, interacts with MGRN1, but does not undergo MGRN1-mediated ubiquitination; this interaction competes with GNAS-binding and thus inhibits agonist-induced cAMP production. Interacts with OPN3; the interaction results in a decrease in MC1R-mediated cAMP signaling and ultimately a decrease in melanin production in melanocytes.

Its subcellular location is the cell membrane. Receptor for MSH (alpha, beta and gamma) and ACTH. The activity of this receptor is mediated by G proteins which activate adenylate cyclase. Mediates melanogenesis, the production of eumelanin (black/brown) and phaeomelanin (red/yellow), via regulation of cAMP signaling in melanocytes. The sequence is that of Melanocyte-stimulating hormone receptor (MC1R) from Cercopithecus diana (Diana monkey).